The sequence spans 109 residues: uncharacterized protein (109 aa).

This is an uncharacterized protein from Mycoplasma pneumoniae (strain ATCC 29342 / M129 / Subtype 1) (Mycoplasmoides pneumoniae).